Consider the following 568-residue polypeptide: bZIP transcription factor 60 (568 aa).

2 stretches are compositionally biased toward low complexity: residues 1–13 (MAEP…FADL) and 60–78 (TTSS…TSSA). Disordered stretches follow at residues 1–29 (MAEP…TLGD) and 45–134 (DFDV…RKKQ). Residues 1–240 (MAEPDLLAPF…PAKKARKTKK (240 aa)) lie on the Cytoplasmic side of the membrane. The span at 103–113 (GGKDGKDDEAK) shows a compositional bias: basic and acidic residues. Positions 111–171 (EAKRRARLVR…AENAALKQQL (61 aa)) constitute a bZIP domain. The interval 113-144 (KRRARLVRNRESAHQSRQRKKQYVEELEGKVK) is basic motif. The leucine-zipper stretch occupies residues 150–157 (IADLTARI). The helical transmembrane segment at 241–261 (VAGVSLLGLLFLMMVCGCLVP) threads the bilayer. The Lumenal segment spans residues 262–568 (AVNRMYGAAY…LPFKSHSPHL (307 aa)). N-linked (GlcNAc...) asparagine glycans are attached at residues N307, N452, N456, N488, and N499. The disordered stretch occupies residues 479–510 (AIPLRGSTSNDTDHFKAPPKNHSQSHAGRKPV).

Belongs to the bZIP family.

The protein resides in the endoplasmic reticulum membrane. The protein localises to the nucleus. Functionally, transcription factor involved in endoplasmic reticulum (ER) stress response. Acts as a ER stress sensor and activates the transcription factor BZIP50 and the chaperone BIP1. In Oryza sativa subsp. japonica (Rice), this protein is bZIP transcription factor 60.